A 171-amino-acid chain; its full sequence is Large ribosomal subunit protein uL10 (171 aa).

This sequence belongs to the universal ribosomal protein uL10 family. As to quaternary structure, part of the ribosomal stalk of the 50S ribosomal subunit. The N-terminus interacts with L11 and the large rRNA to form the base of the stalk. The C-terminus forms an elongated spine to which L12 dimers bind in a sequential fashion forming a multimeric L10(L12)X complex.

Its function is as follows. Forms part of the ribosomal stalk, playing a central role in the interaction of the ribosome with GTP-bound translation factors. The chain is Large ribosomal subunit protein uL10 from Nitrosomonas eutropha (strain DSM 101675 / C91 / Nm57).